The following is a 570-amino-acid chain: Protein HEATR9 (570 aa).

The sequence is that of Protein HEATR9 (HEATR9) from Homo sapiens (Human).